Reading from the N-terminus, the 349-residue chain is Acyl-CoA:acyl-CoA alkyltransferase (349 aa).

The active-site Proton acceptor is Glu97. Catalysis depends on Cys123, which acts as the Acyl-thioester intermediate.

The protein belongs to the thiolase-like superfamily. OleA family.

The enzyme catalyses a 1,2-saturated acyl-CoA + an acyl-CoA + H2O = an (R)-2-alkyl-3-oxoalkanoate + 2 CoA + H(+). In terms of biological role, involved in olefin biosynthesis. Catalyzes a non-decarboxylative head-to-head Claisen condensation of two acyl-CoA molecules, generating an (R)-2-alkyl-3-oxoalkanoate. The S.oneidensis oleABCD genes produce 3,6,9,12,15,19,22,25,28-hentriacontanonaene, which may aid the cells in adapting to a sudden drop in temperature. The protein is Acyl-CoA:acyl-CoA alkyltransferase of Shewanella oneidensis (strain ATCC 700550 / JCM 31522 / CIP 106686 / LMG 19005 / NCIMB 14063 / MR-1).